The following is a 107-amino-acid chain: MSHQQIIQTLIEWIDEHIDQPLNIDVVAKKSGYSKWYLQRMFRTVTHQTLGEYIRQRRLLLAAVELRTTERPIFDIAMDLGYVSQQTFSRVFRREFDRTPSDYRHRL.

Residues 8-106 (QTLIEWIDEH…DRTPSDYRHR (99 aa)) form the HTH araC/xylS-type domain. 2 consecutive DNA-binding regions (H-T-H motif) follow at residues 25–46 (DVVA…RTVT) and 73–96 (IFDI…RREF).

It localises to the cytoplasm. Functionally, transcriptional activator of the superoxide response regulon of E.coli that includes at least 10 genes such as sodA, nfo, zwf and micF. Binds the DNA sequence 5'-GCACN(7)CAA-3'. It also facilitates the subsequent binding of RNA polymerase to the micF and the nfo promoters. This is Regulatory protein SoxS (soxS) from Salmonella typhimurium (strain LT2 / SGSC1412 / ATCC 700720).